Reading from the N-terminus, the 206-residue chain is 2,3-bisphosphoglycerate-dependent phosphoglycerate mutase (206 aa).

Substrate contacts are provided by residues 9–16 (RHGQSEWN), 22–23 (TG), arginine 61, 88–91 (ERNY), lysine 99, 115–116 (RR), and 159–160 (GN). Histidine 10 functions as the Tele-phosphohistidine intermediate in the catalytic mechanism. The active-site Proton donor/acceptor is glutamate 88.

This sequence belongs to the phosphoglycerate mutase family. BPG-dependent PGAM subfamily. As to quaternary structure, homodimer.

It carries out the reaction (2R)-2-phosphoglycerate = (2R)-3-phosphoglycerate. It functions in the pathway carbohydrate degradation; glycolysis; pyruvate from D-glyceraldehyde 3-phosphate: step 3/5. Its function is as follows. Catalyzes the interconversion of 2-phosphoglycerate and 3-phosphoglycerate. The sequence is that of 2,3-bisphosphoglycerate-dependent phosphoglycerate mutase from Bartonella henselae (strain ATCC 49882 / DSM 28221 / CCUG 30454 / Houston 1) (Rochalimaea henselae).